Reading from the N-terminus, the 229-residue chain is Extracellular endonuclease (229 aa).

An N-terminal signal peptide occupies residues 1–19 (MSARFIAVFCLFFTVTAHA). Positions 69-95 (RADASNGNTSSRPGRSGISASAGKPVG) are disordered. Residues 71–81 (DASNGNTSSRP) are compositionally biased toward polar residues.

The protein belongs to the EndA/NucM nuclease family.

It is found in the secreted. The sequence is that of Extracellular endonuclease (endX) from Pseudomonas fluorescens biotype A.